The following is a 631-amino-acid chain: MBT domain-containing protein 1 (631 aa).

Residues methionine 1–asparagine 31 form a disordered region. The FCS-type zinc finger occupies proline 45–arginine 80. Zn(2+) contacts are provided by cysteine 54, cysteine 57, cysteine 74, and cysteine 78. At lysine 115 the chain carries N6-acetyllysine. MBT repeat units follow at residues phenylalanine 144 to proline 248, threonine 256 to arginine 353, phenylalanine 354 to proline 459, and phenylalanine 467 to proline 563. The segment at proline 563–proline 631 is disordered. The span at alanine 564–serine 576 shows a compositional bias: low complexity. Residues lysine 577–methionine 593 show a composition bias toward basic residues.

In terms of assembly, monomer. Component of the NuA4 histone acetyltransferase complex. Interacts with EPC1; interaction is direct and promotes recruitment of MBTD1 into the NuA4 histone acetyltransferase complex.

It localises to the nucleus. Its subcellular location is the chromosome. Its function is as follows. Chromatin reader component of the NuA4 histone acetyltransferase complex, a multiprotein complex involved in transcriptional activation of select genes principally by acetylation of nucleosomal histones H4 and H2A. The NuA4 complex plays a direct role in repair of DNA double-strand breaks (DSBs) by promoting homologous recombination (HR). MBTD1 specifically recognizes and binds monomethylated and dimethylated 'Lys-20' on histone H4 (H4K20me1 and H4K20me2, respectively). In the NuA4 complex, MBTD1 promotes recruitment of the complex to H4K20me marks by competing with TP53BP1 for binding to H4K20me. Following recruitment to H4K20me at DNA breaks, the NuA4 complex catalyzes acetylation of 'Lys-15' on histone H2A (H2AK15), blocking the ubiquitination mark required for TP53BP1 localization at DNA breaks, thereby promoting homologous recombination (HR). The chain is MBT domain-containing protein 1 from Mus musculus (Mouse).